The sequence spans 287 residues: Pantothenate synthetase (287 aa).

30–37 (MGNLHSGH) is a binding site for ATP. The active-site Proton donor is histidine 37. Glutamine 61 is a binding site for (R)-pantoate. Glutamine 61 is a binding site for beta-alanine. 149–152 (GEKD) is a binding site for ATP. Glutamine 155 contributes to the (R)-pantoate binding site. ATP-binding positions include valine 178 and 186 to 189 (LSSR).

The protein belongs to the pantothenate synthetase family. As to quaternary structure, homodimer.

Its subcellular location is the cytoplasm. It catalyses the reaction (R)-pantoate + beta-alanine + ATP = (R)-pantothenate + AMP + diphosphate + H(+). It functions in the pathway cofactor biosynthesis; (R)-pantothenate biosynthesis; (R)-pantothenate from (R)-pantoate and beta-alanine: step 1/1. Its function is as follows. Catalyzes the condensation of pantoate with beta-alanine in an ATP-dependent reaction via a pantoyl-adenylate intermediate. The sequence is that of Pantothenate synthetase from Pseudomonas putida (strain ATCC 47054 / DSM 6125 / CFBP 8728 / NCIMB 11950 / KT2440).